The primary structure comprises 151 residues: Large ribosomal subunit protein uL13 (151 aa).

The tract at residues Tyr-126 to Lys-151 is disordered. The span at Thr-142–Lys-151 shows a compositional bias: polar residues.

The protein belongs to the universal ribosomal protein uL13 family. In terms of assembly, part of the 50S ribosomal subunit.

This protein is one of the early assembly proteins of the 50S ribosomal subunit, although it is not seen to bind rRNA by itself. It is important during the early stages of 50S assembly. In Crocosphaera subtropica (strain ATCC 51142 / BH68) (Cyanothece sp. (strain ATCC 51142)), this protein is Large ribosomal subunit protein uL13.